A 288-amino-acid polypeptide reads, in one-letter code: Extracellular ribonuclease (288 aa).

Positions 1–26 (MTKKAWFLPLVCVLLISGWLAPAASA) are cleaved as a signal peptide.

The protein resides in the secreted. In terms of biological role, mg(2+)-activated ribonuclease which hydrolyzes RNA apparently nonspecifically into oligonucleotides with 5'-terminal phosphate. The protein is Extracellular ribonuclease (bsn) of Bacillus subtilis (strain 168).